A 552-amino-acid polypeptide reads, in one-letter code: Kumamolisin (552 aa).

Over residues 1–17 the composition is skewed to basic and acidic residues; that stretch reads MSDMEKPWKEEEKREVL. Positions 1 to 34 are disordered; that stretch reads MSDMEKPWKEEEKREVLAGHARRQAPQAVDKGPV. The Peptidase S53 domain occupies 193–546; that stretch reads AYTPLDVAQA…IRLLQALLPS (354 aa). Residues glutamate 266, aspartate 270, and serine 466 each act as charge relay system in the active site. Aspartate 504, isoleucine 505, glycine 522, glycine 524, and aspartate 526 together coordinate Ca(2+).

As to quaternary structure, forms monomeric and dimeric crystals. Requires Ca(2+) as cofactor. In terms of processing, autocatalytically processed.

Its subcellular location is the secreted. It catalyses the reaction The enzyme preferentially hydrolyzes peptides having an Ala or Pro residue at P2 position and prefers such charged amino acid residues as Glu or Arg at the P2' position. In the oxidized insulin B chain, kumamolysin preferentially cleaves between Leu(15) and Tyr(16).. Inactivated at 22.4 and 37 degrees Celsius, but not at 60 degrees Celsius, by aldehyde-type inhibitors such as acetyl-Ile-Ala-Phe-CHO and acetyl-Ile-Pro-Phe-CHO. Insensitive to the known carboxyl proteinase inhibitors pepstatin, diazoacetyl-DL-norleucine methyl ester (DAN) and 1,2-epoxy-3-(p-nitrophenoxy)propane (EPNP). Not inhibited by Ala-Ala-Phe-chloromethylketone, an inhibitor of the human tripeptidyl-peptidase 1. Thermostable pepstatin-insensitive serine-carboxyl proteinase. Preferentially hydrolyzes synthetic peptides having an Ala or Pro residue at the P2 position and charged amino acids such as Glu or Arg at the P2' position. In vitro, specifically hydrolyzes the Leu-15-Tyr-16 peptide bond in oxidized insulin B-chain. Additional cleavage of oxidized insulin B-chain at Phe-25-Tyr-26 is detected at a considerably lower rate. Can hydrolyze collagen and the chromogenic substrate azocoll. Shows lower activity with albumin and casein. Shows very weak tripeptidyl peptidase activity. In Bacillus sp. (strain MN-32), this protein is Kumamolisin.